Here is a 238-residue protein sequence, read N- to C-terminus: tRNA (guanine-N(7)-)-methyltransferase (238 aa).

S-adenosyl-L-methionine contacts are provided by Glu70, Asp95, Asp122, and Asp145. The active site involves Asp145. Residues Lys149, Asp181, and 216–219 each bind substrate; that span reads TKFE.

Belongs to the class I-like SAM-binding methyltransferase superfamily. TrmB family.

It carries out the reaction guanosine(46) in tRNA + S-adenosyl-L-methionine = N(7)-methylguanosine(46) in tRNA + S-adenosyl-L-homocysteine. Its pathway is tRNA modification; N(7)-methylguanine-tRNA biosynthesis. Its function is as follows. Catalyzes the formation of N(7)-methylguanine at position 46 (m7G46) in tRNA. The chain is tRNA (guanine-N(7)-)-methyltransferase from Neisseria gonorrhoeae (strain ATCC 700825 / FA 1090).